The primary structure comprises 318 residues: Ribose-phosphate pyrophosphokinase (318 aa).

ATP-binding positions include 46 to 48 (DGE) and 105 to 106 (RQ). Positions 139 and 178 each coordinate Mg(2+). The active site involves Lys-201. D-ribose 5-phosphate contacts are provided by residues Arg-203, Asp-227, and 231 to 235 (DTAGT).

It belongs to the ribose-phosphate pyrophosphokinase family. Class I subfamily. As to quaternary structure, homohexamer. Requires Mg(2+) as cofactor.

It localises to the cytoplasm. It carries out the reaction D-ribose 5-phosphate + ATP = 5-phospho-alpha-D-ribose 1-diphosphate + AMP + H(+). The protein operates within metabolic intermediate biosynthesis; 5-phospho-alpha-D-ribose 1-diphosphate biosynthesis; 5-phospho-alpha-D-ribose 1-diphosphate from D-ribose 5-phosphate (route I): step 1/1. Its function is as follows. Involved in the biosynthesis of the central metabolite phospho-alpha-D-ribosyl-1-pyrophosphate (PRPP) via the transfer of pyrophosphoryl group from ATP to 1-hydroxyl of ribose-5-phosphate (Rib-5-P). The sequence is that of Ribose-phosphate pyrophosphokinase from Helicobacter pylori (strain ATCC 700392 / 26695) (Campylobacter pylori).